Here is a 398-residue protein sequence, read N- to C-terminus: Na(+)/H(+) antiporter NhaA 2 (398 aa).

The next 11 helical transmembrane spans lie at 17 to 37, 59 to 79, 95 to 115, 125 to 145, 154 to 174, 179 to 199, 213 to 233, 262 to 282, 288 to 308, 331 to 351, and 364 to 384; these read ILLM…LAGL, LLLW…GLEV, SLPT…YLGF, GWAI…ALLG, VFLL…IALF, LSIT…ILNL, LLLW…GVVI, FMIL…GMSL, PAAL…VLLF, AVAV…SLAF, and LGTL…LTKV.

Belongs to the NhaA Na(+)/H(+) (TC 2.A.33) antiporter family.

The protein localises to the cell inner membrane. The enzyme catalyses Na(+)(in) + 2 H(+)(out) = Na(+)(out) + 2 H(+)(in). Its function is as follows. Na(+)/H(+) antiporter that extrudes sodium in exchange for external protons. This chain is Na(+)/H(+) antiporter NhaA 2, found in Shewanella denitrificans (strain OS217 / ATCC BAA-1090 / DSM 15013).